The sequence spans 223 residues: MADLVPVLTIDGPSGVGKGTVSKIVAARLGWHYLDSGALYRAVAVAADWAAVDVSDTTALVKCAFDTCVNFAECADGEMRVLVNSIDATDVLRMETTGVLASTIASISEVRATLKKRQQMFRRTPGLVADGRDMGTVIFPDAKYKVFLTAKAEERAQRRYKQLMKKGVSVMFGALLEEIRARDARDACRSVAPLKPADDALLIDSTCMEVDEVVAQVLALVTD.

12-20 (GPSGVGKGT) contacts ATP.

Belongs to the cytidylate kinase family. Type 1 subfamily.

It is found in the cytoplasm. The enzyme catalyses CMP + ATP = CDP + ADP. It catalyses the reaction dCMP + ATP = dCDP + ADP. The sequence is that of Cytidylate kinase from Xylella fastidiosa (strain M23).